Reading from the N-terminus, the 141-residue chain is Large ribosomal subunit protein uL11 (141 aa).

It belongs to the universal ribosomal protein uL11 family. Part of the ribosomal stalk of the 50S ribosomal subunit. Interacts with L10 and the large rRNA to form the base of the stalk. L10 forms an elongated spine to which L12 dimers bind in a sequential fashion forming a multimeric L10(L12)X complex. Post-translationally, one or more lysine residues are methylated.

Forms part of the ribosomal stalk which helps the ribosome interact with GTP-bound translation factors. In Synechococcus sp. (strain CC9311), this protein is Large ribosomal subunit protein uL11.